Here is a 673-residue protein sequence, read N- to C-terminus: Xyloglucan glycosyltransferase 4 (673 aa).

Transmembrane regions (helical) follow at residues 90 to 110 and 144 to 164; these read FIKACLVISIIALSIEIVAHF and IAPLVISLSRFCTVLFLIQSL. The active site involves D238. Residues D297 and D299 each coordinate substrate. D391 is a catalytic residue. Transmembrane regions (helical) follow at residues 469-489 and 494-514; these read LILPFYSFTLFCIILPLTMFI and LPLWIICYVPIFISLLNILPS. Residue S581 is modified to Phosphoserine. Helical transmembrane passes span 623–643 and 648–668; these read VFKKELGLAFLLLTAAARSFL and LHFYFLLFQGLSFLVVGLDLI.

The protein belongs to the glycosyltransferase 2 family. Plant cellulose synthase-like C subfamily. As to quaternary structure, homodimer. Interacts with XXT5. Interacts with FUT1, MUR3 and XLT2. In terms of tissue distribution, expressed in seedlings, roots, leaves, stems, flowers and seeds.

It is found in the golgi apparatus membrane. In terms of biological role, beta-1,4-glucan synthase rather involved in the synthesis of the xyloglucan backbone than cellulose. Seems to work simultaneously with xyloglucan 6-xylosyltransferase. Xyloglucan is a noncellulosic polysaccharides of plant cell wall and consists of a glucan backbone substituted by xylose, galactose and fucose. Associates with other xyloglucan-synthesizing enzymes to form multiprotein complexes for xyloglucan synthesis in the Golgi. This Arabidopsis thaliana (Mouse-ear cress) protein is Xyloglucan glycosyltransferase 4.